A 299-amino-acid chain; its full sequence is ATP phosphoribosyltransferase (299 aa).

The protein belongs to the ATP phosphoribosyltransferase family. Long subfamily. It depends on Mg(2+) as a cofactor.

It localises to the cytoplasm. The enzyme catalyses 1-(5-phospho-beta-D-ribosyl)-ATP + diphosphate = 5-phospho-alpha-D-ribose 1-diphosphate + ATP. The protein operates within amino-acid biosynthesis; L-histidine biosynthesis; L-histidine from 5-phospho-alpha-D-ribose 1-diphosphate: step 1/9. Its activity is regulated as follows. Feedback inhibited by histidine. Functionally, catalyzes the condensation of ATP and 5-phosphoribose 1-diphosphate to form N'-(5'-phosphoribosyl)-ATP (PR-ATP). Has a crucial role in the pathway because the rate of histidine biosynthesis seems to be controlled primarily by regulation of HisG enzymatic activity. The chain is ATP phosphoribosyltransferase from Shewanella sediminis (strain HAW-EB3).